Reading from the N-terminus, the 342-residue chain is 4-hydroxy-3-methylbut-2-enyl diphosphate reductase (342 aa).

Cysteine 47 lines the [4Fe-4S] cluster pocket. The (2E)-4-hydroxy-3-methylbut-2-enyl diphosphate site is built by histidine 78 and histidine 111. Dimethylallyl diphosphate-binding residues include histidine 78 and histidine 111. Isopentenyl diphosphate-binding residues include histidine 78 and histidine 111. Cysteine 133 is a [4Fe-4S] cluster binding site. Histidine 161 contributes to the (2E)-4-hydroxy-3-methylbut-2-enyl diphosphate binding site. Histidine 161 is a dimethylallyl diphosphate binding site. Isopentenyl diphosphate is bound at residue histidine 161. The Proton donor role is filled by glutamate 163. Residue threonine 201 participates in (2E)-4-hydroxy-3-methylbut-2-enyl diphosphate binding. A [4Fe-4S] cluster-binding site is contributed by cysteine 231. Residues serine 259, serine 260, asparagine 261, and serine 303 each contribute to the (2E)-4-hydroxy-3-methylbut-2-enyl diphosphate site. Residues serine 259, serine 260, asparagine 261, and serine 303 each contribute to the dimethylallyl diphosphate site. Isopentenyl diphosphate-binding residues include serine 259, serine 260, asparagine 261, and serine 303.

The protein belongs to the IspH family. Requires [4Fe-4S] cluster as cofactor.

The catalysed reaction is isopentenyl diphosphate + 2 oxidized [2Fe-2S]-[ferredoxin] + H2O = (2E)-4-hydroxy-3-methylbut-2-enyl diphosphate + 2 reduced [2Fe-2S]-[ferredoxin] + 2 H(+). The enzyme catalyses dimethylallyl diphosphate + 2 oxidized [2Fe-2S]-[ferredoxin] + H2O = (2E)-4-hydroxy-3-methylbut-2-enyl diphosphate + 2 reduced [2Fe-2S]-[ferredoxin] + 2 H(+). Its pathway is isoprenoid biosynthesis; dimethylallyl diphosphate biosynthesis; dimethylallyl diphosphate from (2E)-4-hydroxy-3-methylbutenyl diphosphate: step 1/1. It functions in the pathway isoprenoid biosynthesis; isopentenyl diphosphate biosynthesis via DXP pathway; isopentenyl diphosphate from 1-deoxy-D-xylulose 5-phosphate: step 6/6. Functionally, catalyzes the conversion of 1-hydroxy-2-methyl-2-(E)-butenyl 4-diphosphate (HMBPP) into a mixture of isopentenyl diphosphate (IPP) and dimethylallyl diphosphate (DMAPP). Acts in the terminal step of the DOXP/MEP pathway for isoprenoid precursor biosynthesis. This chain is 4-hydroxy-3-methylbut-2-enyl diphosphate reductase, found in Anaplasma marginale (strain Florida).